Here is a 130-residue protein sequence, read N- to C-terminus: Small ribosomal subunit protein uS9 (130 aa).

A disordered region spans residues 109 to 130; that stretch reads RKKERKKYGQPGARAKFQYSKR.

This sequence belongs to the universal ribosomal protein uS9 family.

The chain is Small ribosomal subunit protein uS9 from Maridesulfovibrio salexigens (strain ATCC 14822 / DSM 2638 / NCIMB 8403 / VKM B-1763) (Desulfovibrio salexigens).